The chain runs to 301 residues: UstYa family oxidase phomYd (301 aa).

The tract at residues M1–S26 is disordered. The chain crosses the membrane as a helical span at residues V47–W69. Short sequence motifs (HXXHC) lie at residues T189–C194 and H218–C222. N275 carries N-linked (GlcNAc...) asparagine glycosylation.

It belongs to the ustYa family.

It localises to the membrane. Its pathway is mycotoxin biosynthesis. Its function is as follows. UstYa family oxidase; part of the gene cluster that mediates the biosynthesis of the phomopsins, a group of hexapeptide mycotoxins which infects lupins and causes lupinosis disease in livestock. Within the pathway, phomYd catalyzes the desaturation of the Asp moiety into 2,3-dehydroaspartic acid (dAsp). The pathway starts with the processing of the precursor phomA by several endopeptidases including kexin proteases as well as the cluster-specific S41 family peptidase phomP1 and the oligopeptidase phomG to produce 10 identical copies of the hexapeptide Tyr-Val-Ile-Pro-Ile-Asp. After being excised from the precursor peptide, the core peptides are cyclized and modified post-translationally by enzymes encoded within the gene cluster. The timing and order of proteolysis of the phomA precursor and PTMs are still unknown. Two tyrosinase-like enzymes, phomQ1 and phomQ2, catalyze the chlorination and hydroxylation of Tyr, respectively. PhomYb, is proposed to be involved in the construction of the macrocyclic structure. The other 4 ustYa family proteins may be involved in PTMs that generate the unique structure of phomopsin A. PhomYa is required for the hydroxylation of C-beta of Tyr. PhomYc, phomYd, and phomYe are responsible for the biosynthesis of 2,3-dehydroisoleucine (dIle), 2,3-dehydroaspartic acid (dAsp), and 3,4-dehydroproline (dPro), respectively. While dIle formation by phomYc is indispensable for the installation of dAsp by phomYd, the order of the other PTMs have not been elucidated yet. Most of the biosynthetic enzymes likely have broad substrate specificity, and thus, there might be a metabolic grid from a precursor to phomopsin A. The enzyme(s) responsible for the biosynthesis of 3,4-dehydrovaline (dVal) have also not been identified yet. Finally, phomM acts as an S-adenosylmethionine-dependent alpha-N-methyltransferase that catalyzes two successive N-methylation reactions, converting N-desmethyl-phomopsin A to phomopsin A and phomopsin A further to an N,N-dimethylated congener called phomopsin E. This Diaporthe leptostromiformis (Lupinosis disease fungus) protein is UstYa family oxidase phomYd.